The following is a 645-amino-acid chain: Homeobox protein B-H2 (645 aa).

Disordered regions lie at residues 1–50 (MTTM…TTAT), 86–134 (SSGG…QAAL), 149–176 (REREREREREHYRERHSPPGNNPYAHHP), 240–259 (SHLSHQQHHPHLHHPMHDER), 265–385 (MLQQ…KART), and 553–645 (GAQQ…ALEV). Low complexity predominate over residues 18–29 (SAPSATAHHPAA). The segment covering 106-121 (QHHHHHQQQQQHHHHQ) has biased composition (basic residues). Over residues 122-134 (QQQQQQQHQQAAL) the composition is skewed to low complexity. Residues 149 to 165 (REREREREREHYRERHS) show a composition bias toward basic and acidic residues. Positions 244-253 (HQQHHPHLHH) are enriched in basic residues. Low complexity predominate over residues 275–316 (NNNNNNNNSSSASNNNNNNNNSASANSNIISGNSSSSNNNNG). Over residues 317-328 (SGNGNMLLGGPG) the composition is skewed to gly residues. The segment covering 329–339 (SSISGDQASTI) has biased composition (polar residues). Positions 362–377 (SSANGDSSSHLSLSLS) are enriched in low complexity. Residues 380–439 (QRKARTAFTDHQLQTLEKSFERQKYLSVQDRMELANKLELSDCQVKTWYQNRRTKWKRQT) constitute a DNA-binding region (homeobox). Over residues 553 to 574 (GAQQQQQQPPAASRSPATSQSA) the composition is skewed to low complexity. Polar residues predominate over residues 583–592 (TSSSSRQRLI). Thr-593 carries the phosphothreonine modification. A compositionally biased stretch (pro residues) spans 594–603 (PSPPLNPGSP). Phosphoserine occurs at positions 595 and 602. Basic and acidic residues predominate over residues 618 to 632 (DEERDIERERERERE). Positions 633–645 (RDEDDEEELALEV) are enriched in acidic residues.

This sequence belongs to the Antp homeobox family. B-H1 and B-H2 are abundant in the eye-antenna imaginal disk. Expressed in R1 and R6 cells throughout larval stage until 30 hours after puparium formation, at which time expression is seen in the anterior and posterior primary pigment cells. Coexpressed in embryonic glial cells, neurons of the CNS and PNS, most latitudinal anterior cells of the developing notum and the central circular region of the leg and antennal imaginal disk throughout larval development.

Its subcellular location is the nucleus. In terms of biological role, B-H1 and B-H2 are regulated by members of the wg signaling pathway; wg and dpp. B-H1 and B-H2 are coexpressed and functionally required in R1 and R6 receptor cells and primary pigment cells for normal eye development. Coexpression is also required for the fate determination of external sensory organs, formation of notal microchaetae, formation of presutural macrochaetae, antennal development and for distal leg morphogenesis; segmentation and specification of tarsal segments 3-5. This Drosophila melanogaster (Fruit fly) protein is Homeobox protein B-H2 (B-H2).